The primary structure comprises 562 residues: Long-chain-fatty-acid--CoA ligase (562 aa).

213–224 (YTGGTTGVAKGA) contributes to the ATP binding site.

It belongs to the ATP-dependent AMP-binding enzyme family. Requires Mg(2+) as cofactor.

It is found in the membrane. The catalysed reaction is a long-chain fatty acid + ATP + CoA = a long-chain fatty acyl-CoA + AMP + diphosphate. Its pathway is lipid metabolism; fatty acid beta-oxidation. Functionally, catalyzes the esterification, concomitant with transport, of exogenous long-chain fatty acids into metabolically active CoA thioesters for subsequent degradation or incorporation into phospholipids. The polypeptide is Long-chain-fatty-acid--CoA ligase (fadD) (Yersinia pestis).